We begin with the raw amino-acid sequence, 448 residues long: Serine--tRNA ligase (448 aa).

L-serine is bound at residue 255-257 (TSE). 286–288 (RSE) is an ATP binding site. An L-serine-binding site is contributed by E309. Position 373-376 (373-376 (EISS)) interacts with ATP. S408 provides a ligand contact to L-serine.

It belongs to the class-II aminoacyl-tRNA synthetase family. Type-1 seryl-tRNA synthetase subfamily. Homodimer. The tRNA molecule binds across the dimer.

The protein resides in the cytoplasm. The enzyme catalyses tRNA(Ser) + L-serine + ATP = L-seryl-tRNA(Ser) + AMP + diphosphate + H(+). The catalysed reaction is tRNA(Sec) + L-serine + ATP = L-seryl-tRNA(Sec) + AMP + diphosphate + H(+). It participates in aminoacyl-tRNA biosynthesis; selenocysteinyl-tRNA(Sec) biosynthesis; L-seryl-tRNA(Sec) from L-serine and tRNA(Sec): step 1/1. Its function is as follows. Catalyzes the attachment of serine to tRNA(Ser). Is also able to aminoacylate tRNA(Sec) with serine, to form the misacylated tRNA L-seryl-tRNA(Sec), which will be further converted into selenocysteinyl-tRNA(Sec). This Bordetella petrii (strain ATCC BAA-461 / DSM 12804 / CCUG 43448) protein is Serine--tRNA ligase.